The sequence spans 251 residues: Probable transcriptional regulatory protein MSMEG_2940/MSMEI_2866 (251 aa).

Belongs to the TACO1 family.

The protein resides in the cytoplasm. The chain is Probable transcriptional regulatory protein MSMEG_2940/MSMEI_2866 from Mycolicibacterium smegmatis (strain ATCC 700084 / mc(2)155) (Mycobacterium smegmatis).